Consider the following 706-residue polypeptide: Ribosomal RNA large subunit methyltransferase K/L (706 aa).

A THUMP domain is found at 43–154 (LMYQSLLWSR…RDMASVALDL (112 aa)).

This sequence belongs to the methyltransferase superfamily. RlmKL family.

It is found in the cytoplasm. The enzyme catalyses guanosine(2445) in 23S rRNA + S-adenosyl-L-methionine = N(2)-methylguanosine(2445) in 23S rRNA + S-adenosyl-L-homocysteine + H(+). It catalyses the reaction guanosine(2069) in 23S rRNA + S-adenosyl-L-methionine = N(2)-methylguanosine(2069) in 23S rRNA + S-adenosyl-L-homocysteine + H(+). Specifically methylates the guanine in position 2445 (m2G2445) and the guanine in position 2069 (m7G2069) of 23S rRNA. The protein is Ribosomal RNA large subunit methyltransferase K/L of Yersinia pestis bv. Antiqua (strain Antiqua).